Here is a 119-residue protein sequence, read N- to C-terminus: MPRVKRGVTARARHKKILKLAKGYYGARSRTYRVAVQAVIKAGQYAYRDRRQKKRQFRQLWIARINAASRQNGLSYSRFINGLKKASIEIDRKILADIAVFDKVVFATLVEKAKEALTK.

The protein belongs to the bacterial ribosomal protein bL20 family.

Its function is as follows. Binds directly to 23S ribosomal RNA and is necessary for the in vitro assembly process of the 50S ribosomal subunit. It is not involved in the protein synthesizing functions of that subunit. The sequence is that of Large ribosomal subunit protein bL20 from Shewanella amazonensis (strain ATCC BAA-1098 / SB2B).